The chain runs to 459 residues: Type I restriction enzyme HindI specificity subunit (459 aa).

Belongs to the type-I restriction system S methylase family. The type I restriction/modification system is composed of three polypeptides R, M and S; the restriction enzyme has stoichiometry R(2)M(2)S(1) while the methyltransferase is M(2)S(1).

Functionally, the specificity (S) subunit of a type I restriction enzyme; this subunit dictates DNA sequence specificity. The M and S subunits together form a methyltransferase (MTase) that methylates adenosines in the sequence 5'-RAACN(5)TAG-3'. Methylation protects against cleavage by HindI. In the presence of the R subunit the complex can also act as an endonuclease, binding to the same target sequence but cutting the DNA some distance from this site. Whether the DNA is cut or modified depends on the methylation state of the target sequence. When the target site is unmodified, the DNA is cut. When the target site is hemimethylated, the complex acts as a maintenance MTase modifying the DNA so that both strands become methylated. After locating a non-methylated recognition site, the enzyme complex serves as a molecular motor that translocates DNA in an ATP-dependent manner until a collision occurs that triggers cleavage. In Haemophilus influenzae (strain ATCC 51907 / DSM 11121 / KW20 / Rd), this protein is Type I restriction enzyme HindI specificity subunit.